The primary structure comprises 207 residues: Guanylate kinase (207 aa).

Residues 4–184 (GTLYIVSAPS…ALSDLKTIIR (181 aa)) form the Guanylate kinase-like domain. 11-18 (APSGAGKS) contributes to the ATP binding site.

Belongs to the guanylate kinase family.

Its subcellular location is the cytoplasm. The catalysed reaction is GMP + ATP = GDP + ADP. Functionally, essential for recycling GMP and indirectly, cGMP. In Salmonella paratyphi A (strain ATCC 9150 / SARB42), this protein is Guanylate kinase.